Reading from the N-terminus, the 90-residue chain is Small ribosomal subunit protein bS18 (90 aa).

Residues 1 to 23 (MKPMRQKNTRAQGNKSISNALAS) are disordered. A compositionally biased stretch (polar residues) spans 9–21 (TRAQGNKSISNAL).

The protein belongs to the bacterial ribosomal protein bS18 family. In terms of assembly, part of the 30S ribosomal subunit. Forms a tight heterodimer with protein bS6.

Binds as a heterodimer with protein bS6 to the central domain of the 16S rRNA, where it helps stabilize the platform of the 30S subunit. This chain is Small ribosomal subunit protein bS18, found in Chlorobium luteolum (strain DSM 273 / BCRC 81028 / 2530) (Pelodictyon luteolum).